A 438-amino-acid polypeptide reads, in one-letter code: Na(+)/H(+) antiporter NhaA (438 aa).

A run of 11 helical transmembrane segments spans residues 23-43 (FGGI…NSFL), 62-82 (FFIG…LFFL), 104-124 (SFPV…YFFL), 133-153 (GFGI…MLLG), 162-182 (VFLI…IALF), 185-205 (TNLK…LAVL), 221-241 (VLLW…AVIL), 302-322 (FLAP…NAGV), 337-357 (LGVI…ITFI), 372-392 (WWHI…SMFI), and 410-430 (IAIL…LFAL).

Belongs to the NhaA Na(+)/H(+) (TC 2.A.33) antiporter family.

The protein resides in the cell inner membrane. The catalysed reaction is Na(+)(in) + 2 H(+)(out) = Na(+)(out) + 2 H(+)(in). Na(+)/H(+) antiporter that extrudes sodium in exchange for external protons. The protein is Na(+)/H(+) antiporter NhaA of Helicobacter pylori (strain ATCC 700392 / 26695) (Campylobacter pylori).